A 428-amino-acid chain; its full sequence is Serine--tRNA ligase (428 aa).

231–233 serves as a coordination point for L-serine; it reads TAE. 262 to 264 is a binding site for ATP; sequence RAE. Glu285 is a binding site for L-serine. 349–352 contacts ATP; sequence EISS. Residue Ser385 participates in L-serine binding.

This sequence belongs to the class-II aminoacyl-tRNA synthetase family. Type-1 seryl-tRNA synthetase subfamily. Homodimer. The tRNA molecule binds across the dimer.

Its subcellular location is the cytoplasm. The catalysed reaction is tRNA(Ser) + L-serine + ATP = L-seryl-tRNA(Ser) + AMP + diphosphate + H(+). It catalyses the reaction tRNA(Sec) + L-serine + ATP = L-seryl-tRNA(Sec) + AMP + diphosphate + H(+). It participates in aminoacyl-tRNA biosynthesis; selenocysteinyl-tRNA(Sec) biosynthesis; L-seryl-tRNA(Sec) from L-serine and tRNA(Sec): step 1/1. Functionally, catalyzes the attachment of serine to tRNA(Ser). Is also able to aminoacylate tRNA(Sec) with serine, to form the misacylated tRNA L-seryl-tRNA(Sec), which will be further converted into selenocysteinyl-tRNA(Sec). The chain is Serine--tRNA ligase from Methylorubrum populi (strain ATCC BAA-705 / NCIMB 13946 / BJ001) (Methylobacterium populi).